Reading from the N-terminus, the 209-residue chain is Transcription antitermination protein NusB (209 aa).

It belongs to the NusB family.

In terms of biological role, involved in transcription antitermination. Required for transcription of ribosomal RNA (rRNA) genes. Binds specifically to the boxA antiterminator sequence of the ribosomal RNA (rrn) operons. This is Transcription antitermination protein NusB from Crocosphaera subtropica (strain ATCC 51142 / BH68) (Cyanothece sp. (strain ATCC 51142)).